The primary structure comprises 401 residues: Splicing factor 45 (401 aa).

Position 2 is an N-acetylserine (Ser2). At Ser2 the chain carries Phosphoserine. A Glycyl lysine isopeptide (Lys-Gly) (interchain with G-Cter in SUMO2) cross-link involves residue Lys15. Lys21 carries the N6-acetyllysine modification. Residues Lys24 and Lys33 each participate in a glycyl lysine isopeptide (Lys-Gly) (interchain with G-Cter in SUMO2) cross-link. Position 41 is an N6-acetyllysine; alternate (Lys41). A Glycyl lysine isopeptide (Lys-Gly) (interchain with G-Cter in SUMO2); alternate cross-link involves residue Lys41. Basic and acidic residues predominate over residues 57–68 (LKRGGSSDDRQI). Disordered regions lie at residues 57 to 84 (LKRGGSSDDRQIVDTPPHVAAGLKDPVP) and 114 to 233 (RQRE…FLAN). A Glycyl lysine isopeptide (Lys-Gly) (interchain with G-Cter in SUMO2) cross-link involves residue Lys58. The residue at position 71 (Thr71) is a Phosphothreonine. The segment covering 114-153 (RQREERQRQRELERQKEIEEREKRRKDRHEASGFARRPDP) has biased composition (basic and acidic residues). Residues Ser155 and Ser169 each carry the phosphoserine modification. Positions 182–200 (VEKDKELPRDFPYEEDSRP) are enriched in basic and acidic residues. Phosphoserine is present on Ser222. The G-patch domain maps to 235–283 (GGTVAHKIMQKYGFREGQGLGKHEQGLSTALSVEKTSKRGGKIIVGDAT). Position 237 is a phosphothreonine (Thr237). Residue Lys256 forms a Glycyl lysine isopeptide (Lys-Gly) (interchain with G-Cter in SUMO2) linkage. Ser266 carries the phosphoserine modification. Lys276 is covalently cross-linked (Glycyl lysine isopeptide (Lys-Gly) (interchain with G-Cter in SUMO2)). Residues Ser291 and Ser293 each carry the phosphoserine modification. The RRM domain maps to 306-385 (VVLLRNMVGA…YFGGRVVKAC (80 aa)).

Binds SXL. Associates with the spliceosome. Interacts with SF3B1, SF1 and U2AF2.

Its subcellular location is the nucleus. In terms of biological role, splice factor that binds to the single-stranded 3'AG at the exon/intron border and promotes its utilization in the second catalytic step. Involved in the regulation of alternative splicing and the utilization of cryptic splice sites. Promotes the utilization of a cryptic splice site created by the beta-110 mutation in the HBB gene. The resulting frameshift leads to sickle cell anemia. This chain is Splicing factor 45 (RBM17), found in Homo sapiens (Human).